The primary structure comprises 141 residues: Nucleoside diphosphate kinase (141 aa).

6 residues coordinate ATP: Lys-11, Phe-59, Arg-87, Thr-93, Arg-104, and Asn-114. His-117 serves as the catalytic Pros-phosphohistidine intermediate.

This sequence belongs to the NDK family. In terms of assembly, homotetramer. The cofactor is Mg(2+).

It is found in the cytoplasm. The enzyme catalyses a 2'-deoxyribonucleoside 5'-diphosphate + ATP = a 2'-deoxyribonucleoside 5'-triphosphate + ADP. The catalysed reaction is a ribonucleoside 5'-diphosphate + ATP = a ribonucleoside 5'-triphosphate + ADP. Its function is as follows. Major role in the synthesis of nucleoside triphosphates other than ATP. The ATP gamma phosphate is transferred to the NDP beta phosphate via a ping-pong mechanism, using a phosphorylated active-site intermediate. This Cupriavidus metallidurans (strain ATCC 43123 / DSM 2839 / NBRC 102507 / CH34) (Ralstonia metallidurans) protein is Nucleoside diphosphate kinase.